Consider the following 372-residue polypeptide: Protein phosphatase Mn(2+)-dependent 1K (372 aa).

The N-terminal 29 residues, 1–29, are a transit peptide targeting the mitochondrion; the sequence is MSTAALLTLVRSGGNQVRRRVLLRARGLQ. Residues 46–61 form a critical for association with the BCKDH complex region; sequence KWSRFDPDGSGRPATW. The region spanning 94–346 is the PPM-type phosphatase domain; the sequence is NVGSASQIGK…DNTTAVVVPF (253 aa). Mn(2+) is bound by residues aspartate 127 and glycine 128. At serine 248 the chain carries Phosphoserine. Mn(2+)-binding residues include aspartate 298 and aspartate 337.

Belongs to the PP2C family. Monomer. Interacts with E1 and E2 components of the branched-chain alpha-ketoacid dehydrogenase (BCKDH) complex; this interaction requires colocalization in mitochondria. Interacts with BCKDHA but not with BCKDHB of the E1 component. Interacts with the 24-meric E2 core composed of DBT monomers with a 24:1 stoichiometry; the N-terminal region (residues 49-61) of PPM1K and C-terminal linker of the lipoyl domain of DBT (residues 145-160) are critical for this interaction, whereas the lipoyl prosthetic group is dispensable. Competes with BCKDK for binding to the E2 core; this interaction is modulated by branched-chain alpha-keto acids. At steady state, BCKDH holoenzyme preferentially binds BCKDK and BCKDHA is phosphorylated. In response to high levels of branched-chain alpha-keto acids, the inhibitory BCKDK is replaced by activating PPM1K leading to BCKDHA dephosphorylation and BCAA degradation. The cofactor is Mn(2+).

It is found in the mitochondrion matrix. The catalysed reaction is O-phospho-L-seryl-[3-methyl-2-oxobutanoate dehydrogenase] + H2O = L-seryl-[3-methyl-2-oxobutanoate dehydrogenase] + phosphate. The enzyme catalyses O-phospho-L-seryl-[protein] + H2O = L-seryl-[protein] + phosphate. The protein operates within protein modification. Its function is as follows. Serine/threonine-protein phosphatase component of macronutrients metabolism. Forms a functional kinase and phosphatase pair with BCKDK, serving as a metabolic regulatory node that coordinates branched-chain amino acids (BCAAs) with glucose and lipid metabolism via two distinct phosphoprotein targets: mitochondrial BCKDHA subunit of the branched-chain alpha-ketoacid dehydrogenase (BCKDH) complex and cytosolic ACLY, a lipogenic enzyme of Krebs cycle. At high levels of branched-chain ketoacids, dephosphorylates and activates mitochondrial BCKDH complex, a multisubunit complex consisting of three multimeric components each involved in different steps of BCAA catabolism: E1 composed of BCKDHA and BCKDHB, E2 core composed of DBT monomers, and E3 composed of DLD monomers. Tightly associates with the E2 component of BCKDH complex and dephosphorylates BCKDHA on Ser-347. Regulates the reversible phosphorylation of ACLY in response to changes in cellular carbohydrate abundance such as occurs during fasting to feeding metabolic transition. At fasting state, appears to dephosphorylate ACLY on Ser-455 and inactivate it. Refeeding stimulates MLXIPL/ChREBP transcription factor, leading to increased BCKDK to PPM1K expression ratio, phosphorylation and activation of ACLY that ultimately results in the generation of malonyl-CoA and oxaloacetate immediate substrates of de novo lipogenesis and gluconeogenesis, respectively. Recognizes phosphosites having SxS or RxxS motifs and strictly depends on Mn(2+) ions for the phosphatase activity. Regulates Ca(2+)-induced opening of mitochondrial transition pore and apoptotic cell death. The protein is Protein phosphatase Mn(2+)-dependent 1K (PPM1K) of Bos taurus (Bovine).